Consider the following 374-residue polypeptide: Glutamate 5-kinase (374 aa).

Position 16 (lysine 16) interacts with ATP. Positions 56, 143, and 155 each coordinate substrate. An ATP-binding site is contributed by 175–176 (TD). The PUA domain occupies 282–360 (KGCFVVDEGA…TRIEEILGYV (79 aa)).

The protein belongs to the glutamate 5-kinase family.

It localises to the cytoplasm. The catalysed reaction is L-glutamate + ATP = L-glutamyl 5-phosphate + ADP. It participates in amino-acid biosynthesis; L-proline biosynthesis; L-glutamate 5-semialdehyde from L-glutamate: step 1/2. Functionally, catalyzes the transfer of a phosphate group to glutamate to form L-glutamate 5-phosphate. The chain is Glutamate 5-kinase from Methylococcus capsulatus (strain ATCC 33009 / NCIMB 11132 / Bath).